The following is a 199-amino-acid chain: Tropomyosin-1 (199 aa).

Residues 1–199 (MDKIREKLSN…DEIAASLENL (199 aa)) adopt a coiled-coil conformation. Residues K39 and K59 each participate in a glycyl lysine isopeptide (Lys-Gly) (interchain with G-Cter in ubiquitin) cross-link. Disordered stretches follow at residues 59–81 (KLEAGLSDSKQTEQDNVEKENQI) and 102–147 (LAES…TEKL). Basic and acidic residues-rich tracts occupy residues 68-80 (KQTEQDNVEKENQ) and 102-114 (LAESKQLSEDSHH). Positions 115 to 126 (LQSNNDNFSKKN) are enriched in polar residues. The segment covering 136–147 (SDTKLKETTEKL) has biased composition (basic and acidic residues). Residue K187 forms a Glycyl lysine isopeptide (Lys-Gly) (interchain with G-Cter in ubiquitin) linkage. S195 bears the Phosphoserine mark.

Homodimer.

Its subcellular location is the cytoplasm. It localises to the cytoskeleton. This is Tropomyosin-1 (TPM1) from Saccharomyces cerevisiae (strain ATCC 204508 / S288c) (Baker's yeast).